We begin with the raw amino-acid sequence, 714 residues long: NCK-interacting protein with SH3 domain (714 aa).

An SH3 domain is found at 1 to 58 (MYRALYAFRSAEPNAMAFAAGETFLVLERSSTHWWLAARARSGETGYVPPAYLHRLQG). 2 disordered regions span residues 103 to 126 (TLSR…DHHL) and 139 to 298 (RTGF…AAET). Residues 106 to 121 (RRGTSASSATVMTPST) show a composition bias toward polar residues. Serine 120 carries the phosphoserine modification. The short motif at 168 to 185 (RRAAPTTPPPPVKRRDRE) is the Nuclear localization signal element. Threonine 174 is subject to Phosphothreonine. Residues 200–215 (SGGSSVSSGSSASSTS) are compositionally biased toward low complexity. A compositionally biased stretch (polar residues) spans 216-226 (MDTLYTGSSPS). The segment covering 252-263 (QPSPSKAPSPEP) has biased composition (pro residues). A phosphoserine mark is found at serine 260, serine 286, and serine 673.

As to quaternary structure, associates with the intermediate filaments, vimentin and desmin. Binds the first and third SH3 domains of NCK. Binds the proline-rich domains of N-WASP through its SH3 domain. Similarly, binds diaphanous protein homolog 1 (DRF1). Binds the SH3 domains of GRB2 through its proline-rich domains. Interacts with FASLG.

It localises to the nucleus. Has an important role in stress fiber formation induced by active diaphanous protein homolog 1 (DRF1). Induces microspike formation, in vivo. In vitro, stimulates N-WASP-induced ARP2/3 complex activation in the absence of CDC42. May play an important role in the maintenance of sarcomere and/or in the assembly of myofibrils into sarcomeres. Implicated in regulation of actin polymerization and cell adhesion. This is NCK-interacting protein with SH3 domain (Nckipsd) from Mus musculus (Mouse).